A 65-amino-acid chain; its full sequence is Large ribosomal subunit protein bL35 (65 aa).

Belongs to the bacterial ribosomal protein bL35 family.

The chain is Large ribosomal subunit protein bL35 from Thermotoga neapolitana (strain ATCC 49049 / DSM 4359 / NBRC 107923 / NS-E).